A 914-amino-acid chain; its full sequence is Probable dipeptidyl-aminopeptidase B (914 aa).

Residues 1-10 show a composition bias toward acidic residues; the sequence is MGKSEADEDA. The interval 1 to 81 is disordered; the sequence is MGKSEADEDA…DQPFLPSRKG (81 aa). The Cytoplasmic segment spans residues 1–89; it reads MGKSEADEDA…KGSGARARRV (89 aa). Residues 20-34 show a composition bias toward low complexity; that stretch reads SSSAASQTSSDSGLS. The helical; Signal-anchor for type II membrane protein transmembrane segment at 90 to 110 threads the bilayer; sequence FWGLLLLCLAGWVLAFVLFLI. The Vacuolar portion of the chain corresponds to 111–914; sequence QGRSGYSATS…FKRALPVFVH (804 aa). Asn347 and Asn638 each carry an N-linked (GlcNAc...) asparagine glycan. Catalysis depends on Ser752, which acts as the Charge relay system. An N-linked (GlcNAc...) asparagine glycan is attached at Asn806. Catalysis depends on charge relay system residues Asp829 and His862.

Belongs to the peptidase S9B family.

The protein localises to the vacuole membrane. The catalysed reaction is Release of an N-terminal dipeptide, Xaa-Yaa-|-Zaa-, from a polypeptide, preferentially when Yaa is Pro, provided Zaa is neither Pro nor hydroxyproline.. Functionally, type IV dipeptidyl-peptidase which removes N-terminal dipeptides sequentially from polypeptides having unsubstituted N-termini provided that the penultimate residue is proline. The protein is Probable dipeptidyl-aminopeptidase B (dapB) of Aspergillus terreus (strain NIH 2624 / FGSC A1156).